The primary structure comprises 264 residues: MKKLKLHGFNNLTKSLSFCIYDICYAKTAEERDGYIAYIDELYNANRLTEILTETCSIIGANILNIARQDYEPQGASVTILVSEEPVDPQLIDKTEHPGPLPETVVAHLDKSHICVHTYPESHPEGGLCTFRADIEVSTCGVISPLKALNYLIHQLESDIVTIDYRVRGFTRDVNGMKHFIDHEINSIQNFMSDDIKSLYDMMDVNVYQENIFHTKMLLKEFDLKHYMFHTRPEELTEEERKVITDQLWKEMREIYYGRNIPSV.

Catalysis depends on Ser112, which acts as the Schiff-base intermediate with substrate; via pyruvic acid. Position 112 is a pyruvic acid (Ser); by autocatalysis (Ser112). His117 functions as the Proton acceptor; for processing activity in the catalytic mechanism. Catalysis depends on Cys140, which acts as the Proton donor; for catalytic activity.

Belongs to the prokaryotic AdoMetDC family. Type 2 subfamily. As to quaternary structure, heterooctamer of four alpha and four beta chains arranged as a tetramer of alpha/beta heterodimers. It depends on pyruvate as a cofactor. Post-translationally, is synthesized initially as an inactive proenzyme. Formation of the active enzyme involves a self-maturation process in which the active site pyruvoyl group is generated from an internal serine residue via an autocatalytic post-translational modification. Two non-identical subunits are generated from the proenzyme in this reaction, and the pyruvate is formed at the N-terminus of the alpha chain, which is derived from the carboxyl end of the proenzyme. The post-translation cleavage follows an unusual pathway, termed non-hydrolytic serinolysis, in which the side chain hydroxyl group of the serine supplies its oxygen atom to form the C-terminus of the beta chain, while the remainder of the serine residue undergoes an oxidative deamination to produce ammonia and the pyruvoyl group blocking the N-terminus of the alpha chain.

The enzyme catalyses S-adenosyl-L-methionine + H(+) = S-adenosyl 3-(methylsulfanyl)propylamine + CO2. The protein operates within amine and polyamine biosynthesis; S-adenosylmethioninamine biosynthesis; S-adenosylmethioninamine from S-adenosyl-L-methionine: step 1/1. Its function is as follows. Catalyzes the decarboxylation of S-adenosylmethionine to S-adenosylmethioninamine (dcAdoMet), the propylamine donor required for the synthesis of the polyamines spermine and spermidine from the diamine putrescine. The polypeptide is S-adenosylmethionine decarboxylase proenzyme (Cronobacter sakazakii (strain ATCC BAA-894) (Enterobacter sakazakii)).